The primary structure comprises 608 residues: 1-deoxy-D-xylulose-5-phosphate synthase (608 aa).

Residues His66 and 107 to 109 contribute to the thiamine diphosphate site; that span reads GHA. Mg(2+) is bound at residue Asp138. Thiamine diphosphate contacts are provided by residues 139 to 140, Asn167, Phe277, and Glu350; that span reads GA. Asn167 lines the Mg(2+) pocket.

Belongs to the transketolase family. DXPS subfamily. In terms of assembly, homodimer. Mg(2+) serves as cofactor. Requires thiamine diphosphate as cofactor.

It catalyses the reaction D-glyceraldehyde 3-phosphate + pyruvate + H(+) = 1-deoxy-D-xylulose 5-phosphate + CO2. The protein operates within metabolic intermediate biosynthesis; 1-deoxy-D-xylulose 5-phosphate biosynthesis; 1-deoxy-D-xylulose 5-phosphate from D-glyceraldehyde 3-phosphate and pyruvate: step 1/1. Functionally, catalyzes the acyloin condensation reaction between C atoms 2 and 3 of pyruvate and glyceraldehyde 3-phosphate to yield 1-deoxy-D-xylulose-5-phosphate (DXP). This is 1-deoxy-D-xylulose-5-phosphate synthase from Thermotoga petrophila (strain ATCC BAA-488 / DSM 13995 / JCM 10881 / RKU-1).